Consider the following 520-residue polypeptide: MSNISTDLQDVEKIIVLDYGSQYNQLISRRIREIGVFSELKSHKISAAEVREVNPVGIILSGGPNSVYEDGSFDIDPEIFELGIPILGICYGMQLLTHKLGGKVVPAGDAGNREYGQSTLTHTPSALFESTPDEQTVLMSHGDAVTEIPADFVRTGTSADCLYAAIENPDKHIYGIQFHPEVRHSVYGNDILRNFALNICKAKGDWSMDNFIDMQIKKIRETVGDKRVLLGLSGGVDSSVVGVLLQKAIGDQLICIFVDHGLLRKGEADQVMDMLGGKFGLNIVKADAAKRFLDKLAGVSDPEQKRKIIGNEFVYVFDDEASKLKDVKFLAQGTLYTDVIESGTDTAQTIKSHHNVGGLPEDMQFELIEPLNTLYKDEVRALGTELGMPDHIVWRQPFPGPGLAIRVMGEITEEKLETVRESDAILREEIAKAGLDRDIWQYFTVNTGVRSVGVMGDGRTYDYTIAIRAITSIDGMTADFAKIPWEVLQKISVRIVNEVDHVNRIVYDITSKPPATVEWE.

Residues 13 to 205 (KIIVLDYGSQ…ALNICKAKGD (193 aa)) enclose the Glutamine amidotransferase type-1 domain. Cys-90 serves as the catalytic Nucleophile. Active-site residues include His-179 and Glu-181. One can recognise a GMPS ATP-PPase domain in the interval 206-395 (WSMDNFIDMQ…LGMPDHIVWR (190 aa)). 233 to 239 (SGGVDSS) is an ATP binding site.

Homodimer.

The enzyme catalyses XMP + L-glutamine + ATP + H2O = GMP + L-glutamate + AMP + diphosphate + 2 H(+). The protein operates within purine metabolism; GMP biosynthesis; GMP from XMP (L-Gln route): step 1/1. Its function is as follows. Catalyzes the synthesis of GMP from XMP. In Streptococcus pneumoniae (strain ATCC 700669 / Spain 23F-1), this protein is GMP synthase [glutamine-hydrolyzing].